Here is a 300-residue protein sequence, read N- to C-terminus: Protoheme IX farnesyltransferase (300 aa).

A run of 9 helical transmembrane segments spans residues 24-44 (VTQLAVFCAVIGMFLATPGMV), 48-68 (VLLGGTIGIGLLAGSAFAINC), 94-114 (LQILAFSTVLGGLGAWTLYTF), 118-138 (LTMWLTIATFVGYAVIYTLLL), 146-166 (IVIGGASGAMPPALGWAAVTG), 172-192 (AWILVLIIFVWTPPHFWVLAL), 217-237 (LHILLYTVILFAVTMMPFISG), 239-259 (SGAVYLTSAVLLGALFLAYAW), and 278-298 (IVYLSLLFAALLVDHYARPVI).

This sequence belongs to the UbiA prenyltransferase family. Protoheme IX farnesyltransferase subfamily.

The protein localises to the cell inner membrane. The enzyme catalyses heme b + (2E,6E)-farnesyl diphosphate + H2O = Fe(II)-heme o + diphosphate. Its pathway is porphyrin-containing compound metabolism; heme O biosynthesis; heme O from protoheme: step 1/1. Functionally, converts heme B (protoheme IX) to heme O by substitution of the vinyl group on carbon 2 of heme B porphyrin ring with a hydroxyethyl farnesyl side group. This Burkholderia pseudomallei (strain 1106a) protein is Protoheme IX farnesyltransferase.